Here is a 48-residue protein sequence, read N- to C-terminus: Large ribosomal subunit protein bL32 (48 aa).

The span at 1 to 20 (MAVPKRRVSKTRAAKRRTHY) shows a compositional bias: basic residues. The interval 1–48 (MAVPKRRVSKTRAAKRRTHYKVSLPMPIKDKDGSYKMPHRANPTTKEY) is disordered.

The protein belongs to the bacterial ribosomal protein bL32 family.

The protein is Large ribosomal subunit protein bL32 (rpmF) of Campylobacter jejuni subsp. jejuni serotype O:2 (strain ATCC 700819 / NCTC 11168).